The chain runs to 470 residues: 3-oxo-isoapionate kinase (470 aa).

Asp30 and Arg78 together coordinate substrate. Residues Ser291, 403–406, and Gly451 each bind ATP; that span reads GGDS.

Belongs to the four-carbon acid sugar kinase family.

The catalysed reaction is 3-oxoisoapionate + ATP = 3-oxoisoapionate 4-phosphate + ADP + H(+). Its pathway is carbohydrate metabolism. Functionally, involved in catabolism of D-apiose. Catalyzes the phosphorylation of 3-oxo-isoapionate to 3-oxo-isoapionate 4-phosphate. This Paraburkholderia graminis (strain ATCC 700544 / DSM 17151 / LMG 18924 / NCIMB 13744 / C4D1M) protein is 3-oxo-isoapionate kinase.